Consider the following 492-residue polypeptide: GTPase Der (492 aa).

2 consecutive EngA-type G domains span residues 3–166 (PVVA…MDDV) and 205–378 (IKLA…DSST). Residues 9–16 (GRPNVGKS), 56–60 (DTGGI), 118–121 (NKTD), 211–218 (GRPNVGKS), 258–262 (DTAGV), and 323–326 (NKWD) contribute to the GTP site. Positions 379–463 (RRVSTALLTR…PIRIQFKEGA (85 aa)) constitute a KH-like domain.

Belongs to the TRAFAC class TrmE-Era-EngA-EngB-Septin-like GTPase superfamily. EngA (Der) GTPase family. As to quaternary structure, associates with the 50S ribosomal subunit.

GTPase that plays an essential role in the late steps of ribosome biogenesis. This chain is GTPase Der, found in Cronobacter sakazakii (strain ATCC BAA-894) (Enterobacter sakazakii).